Consider the following 423-residue polypeptide: MEAKQRTRHRDGEERRLVAAADGGAEEYDPWTAWLYKPHTISVLLVGACLLIWASGALDPEGASYHSSATSIKRGVWAMIAVFLAYCTLQAPSTILIRPHPAVWRLVHGLAVVYLVALAFLLFQNRDDARQFMKHLYPDLGVELPERSYGADCRLYVPENPKNKFINIYETLFDEFVVAHILGWWGKAVMIRNQLLLWVLSIGFELMELTFRHMLPNFNECWWDSIILDILICNWFGIWAGMHTVRYFDGKTYEWVGLSRQPSIMGKVKRSLSQFTPAQWDKDQWYPFMGPLRFVQVLFLCVVFMTVELNTFFLKFCLWIPPRNPLVVYRLILWWLIAIPTIREYNSYLQNSKPVKKVGAFCWLSLAICIVELLICMKFGHGLFHDPMPTWLIIFWSSVGVALVVFLLAWSWRNHLKYQRKRL.

The next 9 membrane-spanning stretches (helical) occupy residues 38–58 (PHTI…SGAL), 77–97 (WAMI…TILI), 103–123 (VWRL…FLLF), 195–215 (LLLW…RHML), 222–242 (WWDS…WAGM), 294–314 (FVQV…TFFL), 319–339 (WIPP…LIAI), 359–379 (GAFC…CMKF), and 390–410 (TWLI…LLAW).

This sequence belongs to the CDP-alcohol phosphatidyltransferase class-I family.

It is found in the endoplasmic reticulum membrane. The enzyme catalyses a CDP-1,2-diacyl-sn-glycerol + L-serine = a 1,2-diacyl-sn-glycero-3-phospho-L-serine + CMP + H(+). Its pathway is phospholipid metabolism; phosphatidylethanolamine biosynthesis; phosphatidylethanolamine from CDP-diacylglycerol: step 1/2. Catalyzes a base-exchange reaction in which the polar head group of phosphatidylethanolamine (PE) or phosphatidylcholine (PC) is replaced by L-serine. This Oryza sativa subsp. japonica (Rice) protein is CDP-diacylglycerol--serine O-phosphatidyltransferase 2 (PSS2).